The sequence spans 765 residues: Cullin-5 (765 aa).

Residues 696 to 757 form the Cullin neddylation domain; that stretch reads RELRVQEGIV…NKYMERRADD (62 aa). A Glycyl lysine isopeptide (Lys-Gly) (interchain with G-Cter in NEDD8) cross-link involves residue lysine 709.

The protein belongs to the cullin family. Interacts with rbx-1 and rbx-2. Neddylated; which enhances the ubiquitination activity of SCF-like complex.

It participates in protein modification; protein ubiquitination. Its function is as follows. Probable core component of cullin-based SCF-like E3 ubiquitin-protein ligase complexes which mediate the ubiquitination and subsequent proteasomal degradation of target proteins. In association with rbx-2 seems to be involved in meiotic cell cycle progression in the germline. Required for phosphorylation of the MAP kinase MPK-1 in the germline. The chain is Cullin-5 (cul-5) from Caenorhabditis elegans.